The following is a 236-amino-acid chain: 2,3,4,5-tetrahydropyridine-2,6-dicarboxylate N-acetyltransferase (236 aa).

It belongs to the transferase hexapeptide repeat family. DapH subfamily.

It carries out the reaction (S)-2,3,4,5-tetrahydrodipicolinate + acetyl-CoA + H2O = L-2-acetamido-6-oxoheptanedioate + CoA. Its pathway is amino-acid biosynthesis; L-lysine biosynthesis via DAP pathway; LL-2,6-diaminopimelate from (S)-tetrahydrodipicolinate (acetylase route): step 1/3. Functionally, catalyzes the transfer of an acetyl group from acetyl-CoA to tetrahydrodipicolinate. The polypeptide is 2,3,4,5-tetrahydropyridine-2,6-dicarboxylate N-acetyltransferase (Brevibacillus brevis (strain 47 / JCM 6285 / NBRC 100599)).